Here is a 186-residue protein sequence, read N- to C-terminus: UPF0301 protein CGSHiEE_01530 (186 aa).

It belongs to the UPF0301 (AlgH) family.

This chain is UPF0301 protein CGSHiEE_01530, found in Haemophilus influenzae (strain PittEE).